Consider the following 299-residue polypeptide: Glycine--tRNA ligase alpha subunit (299 aa).

This sequence belongs to the class-II aminoacyl-tRNA synthetase family. In terms of assembly, tetramer of two alpha and two beta subunits.

Its subcellular location is the cytoplasm. It catalyses the reaction tRNA(Gly) + glycine + ATP = glycyl-tRNA(Gly) + AMP + diphosphate. The protein is Glycine--tRNA ligase alpha subunit of Dictyoglomus thermophilum (strain ATCC 35947 / DSM 3960 / H-6-12).